The sequence spans 83 residues: Neurotoxin LmNaTx3 (83 aa).

The N-terminal stretch at 1-21 is a signal peptide; sequence MQLKIQLLMLVLMIVLTDVYS. Residues 22 to 83 form the LCN-type CS-alpha/beta domain; sequence KDGFIVSKKN…NIAMKNKNYC (62 aa). Intrachain disulfides connect Cys32–Cys83, Cys36–Cys59, Cys45–Cys64, and Cys49–Cys66.

Belongs to the long (4 C-C) scorpion toxin superfamily. Sodium channel inhibitor family. Alpha subfamily. As to expression, expressed by the venom gland.

The protein resides in the secreted. Functionally, binds voltage-independently at site-3 of voltage-gated sodium channels (Nav) and inhibits the inactivation of the activated channels, thereby blocking neuronal transmission. This is Neurotoxin LmNaTx3 from Lychas mucronatus (Chinese swimming scorpion).